A 366-amino-acid chain; its full sequence is DNA polymerase IV (366 aa).

Positions I6–G197 constitute a UmuC domain. 2 residues coordinate Mg(2+): D10 and D114. E115 is a catalytic residue.

Belongs to the DNA polymerase type-Y family. In terms of assembly, monomer. Mg(2+) is required as a cofactor.

The protein localises to the cytoplasm. It catalyses the reaction DNA(n) + a 2'-deoxyribonucleoside 5'-triphosphate = DNA(n+1) + diphosphate. Its function is as follows. Poorly processive, error-prone DNA polymerase involved in untargeted mutagenesis. Copies undamaged DNA at stalled replication forks, which arise in vivo from mismatched or misaligned primer ends. These misaligned primers can be extended by PolIV. Exhibits no 3'-5' exonuclease (proofreading) activity. May be involved in translesional synthesis. The polypeptide is DNA polymerase IV (Methanosarcina acetivorans (strain ATCC 35395 / DSM 2834 / JCM 12185 / C2A)).